We begin with the raw amino-acid sequence, 100 residues long: Urease subunit gamma (100 aa).

Belongs to the urease gamma subunit family. In terms of assembly, heterotrimer of UreA (gamma), UreB (beta) and UreC (alpha) subunits. Three heterotrimers associate to form the active enzyme.

The protein localises to the cytoplasm. It carries out the reaction urea + 2 H2O + H(+) = hydrogencarbonate + 2 NH4(+). It participates in nitrogen metabolism; urea degradation; CO(2) and NH(3) from urea (urease route): step 1/1. The chain is Urease subunit gamma from Cyanothece sp. (strain PCC 7425 / ATCC 29141).